The chain runs to 510 residues: Conditioned medium factor receptor 1 (510 aa).

Over 1 to 36 (MDSKYIQKTLSAITEQITKNAAVQKVLDNKFVKEHK) the chain is Cytoplasmic. A helical transmembrane segment spans residues 37-55 (YAAAAATVGLGVVAATTIV). Residues 56 to 510 (KAVNCEGKRY…QGKKQIKKLD (455 aa)) lie on the Extracellular side of the membrane.

The protein localises to the membrane. In terms of biological role, receptor for cmfA, that appears to mediate the G-independent cmfA signal transduction. The protein is Conditioned medium factor receptor 1 (cmfB) of Dictyostelium discoideum (Social amoeba).